The chain runs to 220 residues: Adenylate kinase (220 aa).

10 to 15 (GAGKGT) lines the ATP pocket. The interval 30–59 (STGDMLRAAVKAGSPLGVEAKGYMDAGKLV) is NMP. AMP is bound by residues Thr-31, Arg-36, 57 to 59 (KLV), 85 to 88 (GFPR), and Gln-92. The segment at 122 to 159 (GRRTHAASGRTYHVKFNPPKVEGQDDVTGEPLIQRDDD) is LID. Residues Arg-123 and 132–133 (TY) each bind ATP. Residues Arg-156 and Arg-167 each contribute to the AMP site. Gly-206 contributes to the ATP binding site.

It belongs to the adenylate kinase family. Monomer.

It is found in the cytoplasm. The enzyme catalyses AMP + ATP = 2 ADP. It participates in purine metabolism; AMP biosynthesis via salvage pathway; AMP from ADP: step 1/1. Functionally, catalyzes the reversible transfer of the terminal phosphate group between ATP and AMP. Plays an important role in cellular energy homeostasis and in adenine nucleotide metabolism. The chain is Adenylate kinase from Burkholderia vietnamiensis (strain G4 / LMG 22486) (Burkholderia cepacia (strain R1808)).